The sequence spans 589 residues: Putative phospholipase B-like 2 (589 aa).

The signal sequence occupies residues 1–41 (MVAPMYGSPGGRLARAVTRALALALVLALLVGLFLSGLTGA). Asn-88 and Asn-110 each carry an N-linked (GlcNAc...) asparagine glycan. A disulfide bond links Cys-142 and Cys-152. 4 N-linked (GlcNAc...) asparagine glycosylation sites follow: Asn-174, Asn-231, Asn-436, and Asn-465. Cys-492 and Cys-495 are disulfide-bonded. Asn-515 is a glycosylation site (N-linked (GlcNAc...) asparagine).

The protein belongs to the phospholipase B-like family. As to quaternary structure, interacts with IGF2R. Post-translationally, glycosylated; contains mannose 6-phosphate sugars.

Its subcellular location is the lysosome lumen. Functionally, putative phospholipase. This Bos taurus (Bovine) protein is Putative phospholipase B-like 2 (PLBD2).